We begin with the raw amino-acid sequence, 238 residues long: tRNA (guanine-N(7)-)-methyltransferase (238 aa).

Positions 68, 93, 120, and 143 each coordinate S-adenosyl-L-methionine. Residue Asp-143 is part of the active site. Residues Lys-147, Asp-179, and 216–219 (TKFE) contribute to the substrate site.

Belongs to the class I-like SAM-binding methyltransferase superfamily. TrmB family.

The enzyme catalyses guanosine(46) in tRNA + S-adenosyl-L-methionine = N(7)-methylguanosine(46) in tRNA + S-adenosyl-L-homocysteine. It participates in tRNA modification; N(7)-methylguanine-tRNA biosynthesis. Functionally, catalyzes the formation of N(7)-methylguanine at position 46 (m7G46) in tRNA. The sequence is that of tRNA (guanine-N(7)-)-methyltransferase from Shewanella oneidensis (strain ATCC 700550 / JCM 31522 / CIP 106686 / LMG 19005 / NCIMB 14063 / MR-1).